The primary structure comprises 181 residues: Large ribosomal subunit protein uL16 (181 aa).

The protein belongs to the universal ribosomal protein uL16 family.

In Pyrococcus abyssi (strain GE5 / Orsay), this protein is Large ribosomal subunit protein uL16.